A 352-amino-acid polypeptide reads, in one-letter code: C-C chemokine receptor type 5 (352 aa).

Residues M1–A30 lie on the Extracellular side of the membrane. Sulfotyrosine is present on Y3. 2 O-linked (GalNAc...) serine glycosylation sites follow: S6 and S7. Residues Y10, Y14, and Y15 each carry the sulfotyrosine modification. 2 disulfide bridges follow: C20-C269 and C101-C178. A helical membrane pass occupies residues R31–C58. Residues K59 to Y68 lie on the Cytoplasmic side of the membrane. Residues L69–Y89 form a helical membrane-spanning segment. Residues A90–Q102 are Extracellular-facing. The chain crosses the membrane as a helical span at residues L103–I124. The Cytoplasmic portion of the chain corresponds to D125–T141. A helical transmembrane segment spans residues V142–F166. The Extracellular portion of the chain corresponds to T167–I198. A helical membrane pass occupies residues V199–L218. Topologically, residues K219–R235 are cytoplasmic. Residues L236–F260 form a helical membrane-spanning segment. At Q261–Q277 the chain is on the extracellular side. The helical transmembrane segment at A278–G301 threads the bilayer. The Cytoplasmic portion of the chain corresponds to E302–L352. 3 S-palmitoyl cysteine lipidation sites follow: C321, C323, and C324. S336, S337, and S342 each carry phosphoserine; by BARK1.

This sequence belongs to the G-protein coupled receptor 1 family. As to quaternary structure, interacts with PRAF2. Efficient ligand binding to CCL3/MIP-1alpha and CCL4/MIP-1beta requires sulfation, O-glycosylation and sialic acid modifications. Glycosylation on Ser-6 is required for efficient binding of CCL4. Interacts with GRK2. Interacts with ARRB1 and ARRB2. Interacts with CNIH4. Interacts with S100A4; this interaction stimulates T-lymphocyte chemotaxis. Post-translationally, sulfated on at least 2 of the N-terminal tyrosines. Sulfation is required for efficient binding of the chemokines, CCL3 and CCL4. In terms of processing, palmitoylation in the C-terminal is important for cell surface expression. Phosphorylation on serine residues in the C-terminal is stimulated by binding CC chemokines especially by APO-RANTES. Post-translationally, O-glycosylated, but not N-glycosylated. Ser-6 appears to be the major site even if Ser-7 may be also O-glycosylated. Also sialylated glycans present which contribute to chemokine binding. Thr-16 and Ser-17 may also be glycosylated and, if so, with small moieties such as a T-antigen.

The protein resides in the cell membrane. In terms of biological role, receptor for a number of inflammatory CC-chemokines including CCL3/MIP-1-alpha, CCL4/MIP-1-beta and RANTES and subsequently transduces a signal by increasing the intracellular calcium ion level. May play a role in the control of granulocytic lineage proliferation or differentiation. Participates in T-lymphocyte migration to the infection site by acting as a chemotactic receptor. The protein is C-C chemokine receptor type 5 (CCR5) of Allochrocebus lhoesti (L'Hoest's monkey).